A 296-amino-acid polypeptide reads, in one-letter code: 4-hydroxy-tetrahydrodipicolinate synthase (296 aa).

Threonine 45 contacts pyruvate. The active-site Proton donor/acceptor is the tyrosine 133. The Schiff-base intermediate with substrate role is filled by lysine 161. Isoleucine 203 is a binding site for pyruvate.

It belongs to the DapA family. In terms of assembly, homotetramer; dimer of dimers.

The protein localises to the cytoplasm. It catalyses the reaction L-aspartate 4-semialdehyde + pyruvate = (2S,4S)-4-hydroxy-2,3,4,5-tetrahydrodipicolinate + H2O + H(+). It participates in amino-acid biosynthesis; L-lysine biosynthesis via DAP pathway; (S)-tetrahydrodipicolinate from L-aspartate: step 3/4. Its function is as follows. Catalyzes the condensation of (S)-aspartate-beta-semialdehyde [(S)-ASA] and pyruvate to 4-hydroxy-tetrahydrodipicolinate (HTPA). This is 4-hydroxy-tetrahydrodipicolinate synthase from Idiomarina loihiensis (strain ATCC BAA-735 / DSM 15497 / L2-TR).